A 486-amino-acid polypeptide reads, in one-letter code: Cardiolipin synthase A (486 aa).

The next 2 helical transmembrane spans lie at 3-23 (TFYT…IAGV) and 38-58 (MAWL…YLSF). 2 PLD phosphodiesterase domains span residues 219–246 (MDLR…VDPR) and 399–426 (KDGL…DMRS). Active-site residues include His-224, Lys-226, Asp-231, His-404, Lys-406, and Asp-411.

It belongs to the phospholipase D family. Cardiolipin synthase subfamily. ClsA sub-subfamily.

Its subcellular location is the cell inner membrane. It carries out the reaction 2 a 1,2-diacyl-sn-glycero-3-phospho-(1'-sn-glycerol) = a cardiolipin + glycerol. In terms of biological role, catalyzes the reversible phosphatidyl group transfer from one phosphatidylglycerol molecule to another to form cardiolipin (CL) (diphosphatidylglycerol) and glycerol. This Pectobacterium carotovorum subsp. carotovorum (strain PC1) protein is Cardiolipin synthase A.